We begin with the raw amino-acid sequence, 262 residues long: Phosphatidylglycerol--prolipoprotein diacylglyceryl transferase (262 aa).

4 consecutive transmembrane segments (helical) span residues 9 to 29 (LGPL…ILAV), 41 to 61 (IIPD…ILGA), 80 to 100 (IFAI…GALV), and 109 to 129 (LINT…AQSL). Arg-131 contributes to the a 1,2-diacyl-sn-glycero-3-phospho-(1'-sn-glycerol) binding site. Helical transmembrane passes span 167 to 187 (QPTF…ILIF), 197 to 217 (GHIT…IEGM), and 226 to 246 (GLRV…MIVI).

The protein belongs to the Lgt family.

The protein localises to the cell membrane. The enzyme catalyses L-cysteinyl-[prolipoprotein] + a 1,2-diacyl-sn-glycero-3-phospho-(1'-sn-glycerol) = an S-1,2-diacyl-sn-glyceryl-L-cysteinyl-[prolipoprotein] + sn-glycerol 1-phosphate + H(+). It participates in protein modification; lipoprotein biosynthesis (diacylglyceryl transfer). Functionally, catalyzes the transfer of the diacylglyceryl group from phosphatidylglycerol to the sulfhydryl group of the N-terminal cysteine of a prolipoprotein, the first step in the formation of mature lipoproteins. This Streptococcus pneumoniae (strain Taiwan19F-14) protein is Phosphatidylglycerol--prolipoprotein diacylglyceryl transferase.